A 135-amino-acid polypeptide reads, in one-letter code: ATP synthase epsilon chain (135 aa).

Belongs to the ATPase epsilon chain family. In terms of assembly, F-type ATPases have 2 components, CF(1) - the catalytic core - and CF(0) - the membrane proton channel. CF(1) has five subunits: alpha(3), beta(3), gamma(1), delta(1), epsilon(1). CF(0) has three main subunits: a, b and c.

The protein resides in the cell inner membrane. Produces ATP from ADP in the presence of a proton gradient across the membrane. This chain is ATP synthase epsilon chain, found in Rhizobium etli (strain ATCC 51251 / DSM 11541 / JCM 21823 / NBRC 15573 / CFN 42).